Consider the following 359-residue polypeptide: Probable cinnamyl alcohol dehydrogenase 8A (359 aa).

Cys45 provides a ligand contact to Zn(2+). NADP(+) is bound at residue Thr47. 7 residues coordinate Zn(2+): His67, Glu68, Cys98, Cys101, Cys104, Cys112, and Cys161. Residues Thr165, 186–191, 209–214, Thr249, Gly273, and 296–298 contribute to the NADP(+) site; these read GLGGLG, SSSPAK, and SGG.

This sequence belongs to the zinc-containing alcohol dehydrogenase family. Homodimer. Requires Zn(2+) as cofactor.

It carries out the reaction (E)-cinnamyl alcohol + NADP(+) = (E)-cinnamaldehyde + NADPH + H(+). The enzyme catalyses (E)-coniferol + NADP(+) = (E)-coniferaldehyde + NADPH + H(+). The catalysed reaction is (E)-sinapyl alcohol + NADP(+) = (E)-sinapaldehyde + NADPH + H(+). It catalyses the reaction (E)-4-coumaroyl alcohol + NADP(+) = (E)-4-coumaraldehyde + NADPH + H(+). It carries out the reaction (E)-caffeyl alcohol + NADP(+) = (E)-caffeyl aldehyde + NADPH + H(+). Its pathway is aromatic compound metabolism; phenylpropanoid biosynthesis. Functionally, involved in lignin biosynthesis. Catalyzes the final step specific for the production of lignin monomers. Catalyzes the NADPH-dependent reduction of coniferaldehyde, 5-hydroxyconiferaldehyde, sinapaldehyde, 4-coumaraldehyde and caffeyl aldehyde to their respective alcohols. In Oryza sativa subsp. japonica (Rice), this protein is Probable cinnamyl alcohol dehydrogenase 8A.